A 361-amino-acid chain; its full sequence is sn-glycerol-3-phosphate import ATP-binding protein UgpC (361 aa).

Positions 4-235 constitute an ABC transporter domain; sequence LSFRNLKKTY…PASTFVAGFI (232 aa). 37–44 provides a ligand contact to ATP; it reads GPSGCGKS.

This sequence belongs to the ABC transporter superfamily. sn-glycerol-3-phosphate importer (TC 3.A.1.1.3) family. As to quaternary structure, the complex is composed of two ATP-binding proteins (UgpC), two transmembrane proteins (UgpA and UgpE) and a solute-binding protein (UgpB).

It is found in the cell inner membrane. It catalyses the reaction sn-glycerol 3-phosphate(out) + ATP + H2O = sn-glycerol 3-phosphate(in) + ADP + phosphate + H(+). Functionally, part of the ABC transporter complex UgpBAEC involved in sn-glycerol-3-phosphate (G3P) import. Responsible for energy coupling to the transport system. The protein is sn-glycerol-3-phosphate import ATP-binding protein UgpC of Bordetella avium (strain 197N).